A 275-amino-acid polypeptide reads, in one-letter code: Probable dual specificity protein phosphatase DDB_G0271350 (275 aa).

The 142-residue stretch at 2 to 143 (GISMILDNFL…LCDLELKLTN (142 aa)) folds into the Tyrosine-protein phosphatase domain. Catalysis depends on Cys-87, which acts as the Phosphocysteine intermediate.

The protein belongs to the protein-tyrosine phosphatase family. Non-receptor class dual specificity subfamily.

It carries out the reaction O-phospho-L-tyrosyl-[protein] + H2O = L-tyrosyl-[protein] + phosphate. The catalysed reaction is O-phospho-L-seryl-[protein] + H2O = L-seryl-[protein] + phosphate. The enzyme catalyses O-phospho-L-threonyl-[protein] + H2O = L-threonyl-[protein] + phosphate. In terms of biological role, has a dual specificity toward Ser/Thr and Tyr-containing proteins. The polypeptide is Probable dual specificity protein phosphatase DDB_G0271350 (Dictyostelium discoideum (Social amoeba)).